The sequence spans 186 residues: Bifunctional protein PyrR (186 aa).

The PRPP-binding signature appears at 101-113 (VVLVDDVLYTGRT).

Belongs to the purine/pyrimidine phosphoribosyltransferase family. PyrR subfamily.

The enzyme catalyses UMP + diphosphate = 5-phospho-alpha-D-ribose 1-diphosphate + uracil. In terms of biological role, regulates the transcription of the pyrimidine nucleotide (pyr) operon in response to exogenous pyrimidines. Its function is as follows. Also displays a weak uracil phosphoribosyltransferase activity which is not physiologically significant. This chain is Bifunctional protein PyrR, found in Syntrophobacter fumaroxidans (strain DSM 10017 / MPOB).